The primary structure comprises 86 residues: Small ribosomal subunit protein bS20 (86 aa).

This sequence belongs to the bacterial ribosomal protein bS20 family.

Binds directly to 16S ribosomal RNA. The chain is Small ribosomal subunit protein bS20 from Arthrobacter sp. (strain FB24).